The primary structure comprises 225 residues: Putative tyrosine-protein phosphatase OCA1 (225 aa).

Positions 1 to 11 (MTDNCREDDDN) are enriched in acidic residues. The tract at residues 1-24 (MTDNCREDDDNLGTSGDNALSAPT) is disordered. The segment covering 12-24 (LGTSGDNALSAPT) has biased composition (polar residues). The 155-residue stretch at 42–196 (NFCPVERYLY…FDTKSVTIDK (155 aa)) folds into the Tyrosine-protein phosphatase domain. C138 functions as the Phosphocysteine intermediate in the catalytic mechanism.

The protein belongs to the protein-tyrosine phosphatase family.

Its subcellular location is the cytoplasm. The enzyme catalyses O-phospho-L-tyrosyl-[protein] + H2O = L-tyrosyl-[protein] + phosphate. Its function is as follows. Putative tyrosine-protein phosphatase required for protection against superoxide stress. The polypeptide is Putative tyrosine-protein phosphatase OCA1 (OCA1) (Eremothecium gossypii (strain ATCC 10895 / CBS 109.51 / FGSC 9923 / NRRL Y-1056) (Yeast)).